Reading from the N-terminus, the 575-residue chain is U3 small nucleolar RNA-associated protein 9 (575 aa).

2 stretches are compositionally biased toward basic and acidic residues: residues 340 to 355 and 364 to 375; these read NEKN…KLEE and VQHEKKETETKI. The segment at 340-375 is disordered; it reads NEKNNADEADQKKLEEKEEEAQPEVQHEKKETETKI. Phosphoserine is present on residues Ser547 and Ser564.

In terms of assembly, interacts with snoRNA U3. Interacts with MPP10. Component of the ribosomal small subunit (SSU) processome composed of at least 40 protein subunits and snoRNA U3. In the absence of snoRNA3, forms a complex with other t-UTPs. This complex can associate with pre-18S ribosomal RNAs.

Its subcellular location is the nucleus. It is found in the nucleolus. In terms of biological role, involved in nucleolar processing of pre-18S ribosomal RNA. Required for optimal pre-ribosomal RNA transcription by RNA polymerase I together with a subset of U3 proteins required for transcription (t-UTPs). The sequence is that of U3 small nucleolar RNA-associated protein 9 (UTP9) from Saccharomyces cerevisiae (strain ATCC 204508 / S288c) (Baker's yeast).